The primary structure comprises 158 residues: Hypoxanthine DNA glycosylase (158 aa).

The active site involves Asn-39.

The protein belongs to the uracil-DNA glycosylase (UDG) superfamily. Type 6 (HDG) family.

Functionally, excises hypoxanthine, a deamination product of adenine, from double-stranded DNA. Acts on double-stranded DNA containing G/I, T/I, A/I and C/I base pairs, but not on single-stranded inosine-containing DNA. Also has minor xanthine DNA glycosylase activity. Lacks any detectable uracil-DNA glycosylase activity. This is Hypoxanthine DNA glycosylase from Methanosarcina acetivorans (strain ATCC 35395 / DSM 2834 / JCM 12185 / C2A).